The chain runs to 323 residues: uncharacterized protein (323 aa).

The next 2 membrane-spanning stretches (helical) occupy residues 232 to 252 (LASYAGILMSGTGFLYMFIVL) and 267 to 287 (SLIVIQLLFSGIVLLILGVIG).

This sequence belongs to the glycosyltransferase 2 family. GtrB subfamily.

It localises to the cell membrane. This is an uncharacterized protein from Bacillus subtilis (strain 168).